The primary structure comprises 626 residues: Receptor-like protein 4 (626 aa).

An N-terminal signal peptide occupies residues 1-22 (MMLRFILASLLLSSFSLYSSLA). The Extracellular segment spans residues 23–549 (RPAPYALRIS…CGPHLSSGAK (527 aa)). Residues N61, N282, N333, and N417 are each glycosylated (N-linked (GlcNAc...) asparagine). LRR repeat units follow at residues 420-444 (RWFI…ISKL), 445-468 (KHLQ…LGSV), 470-492 (SLEV…LGEL), and 493-516 (TSLR…VGGR). Residues N451 and N482 are each glycosylated (N-linked (GlcNAc...) asparagine). N-linked (GlcNAc...) asparagine glycosylation occurs at N524. The helical transmembrane segment at 550–570 (IGIAFGVSLAFLLIVACAMIW) threads the bilayer. At 571–626 (WKRRQNILRAQQIAARGAPYAKKRTHVSHDIQMSRHGHNNHGQARTAVENGPSLLS) the chain is on the cytoplasmic side. Positions 603–626 (MSRHGHNNHGQARTAVENGPSLLS) are disordered.

It belongs to the RLP family.

The protein resides in the cell membrane. This Arabidopsis thaliana (Mouse-ear cress) protein is Receptor-like protein 4.